The chain runs to 405 residues: Histone deacetylase clr6 (405 aa).

The histone deacetylase stretch occupies residues 6–318; the sequence is KKVSYFYDED…WTYETGLLAG (313 aa). The active site involves His138.

Belongs to the histone deacetylase family. HD type 1 subfamily. In terms of assembly, heterotetramer of alp13, clr6, prw1 and pst2.

Its subcellular location is the nucleus. It carries out the reaction N(6)-acetyl-L-lysyl-[histone] + H2O = L-lysyl-[histone] + acetate. Responsible for the deacetylation of lysine residues on the N-terminal part of the core histones (H2A, H2B, H3 and H4). Histone deacetylation gives a tag for epigenetic repression and plays an important role in transcriptional regulation, cell cycle progression and developmental events. Histone deacetylases act via the formation of large multiprotein complexes. Has a role in chromatin assembly and chromosome segregation. This is Histone deacetylase clr6 (clr6) from Schizosaccharomyces pombe (strain 972 / ATCC 24843) (Fission yeast).